The following is a 366-amino-acid chain: Dihydroflavonol 4-reductase (366 aa).

Lys-45 and Tyr-164 together coordinate NADP(+).

Belongs to the NAD(P)-dependent epimerase/dehydratase family. Dihydroflavonol-4-reductase subfamily.

It catalyses the reaction a (2R,3S,4S)-leucoanthocyanidin + NADP(+) = a (2R,3R)-dihydroflavonol + NADPH + H(+). The catalysed reaction is (2S)-flavan-4-ol + NADP(+) = (2S)-flavanone + NADPH + H(+). Its pathway is pigment biosynthesis; anthocyanin biosynthesis. Bifunctional enzyme involved in flavonoid metabolism. The protein is Dihydroflavonol 4-reductase (DFR) of Gerbera hybrida (Daisy).